The following is a 235-amino-acid chain: Ubiquinone biosynthesis O-methyltransferase (235 aa).

Residues arginine 36, glycine 56, aspartate 77, and methionine 122 each coordinate S-adenosyl-L-methionine.

It belongs to the methyltransferase superfamily. UbiG/COQ3 family.

It catalyses the reaction a 3-demethylubiquinol + S-adenosyl-L-methionine = a ubiquinol + S-adenosyl-L-homocysteine + H(+). The enzyme catalyses a 3-(all-trans-polyprenyl)benzene-1,2-diol + S-adenosyl-L-methionine = a 2-methoxy-6-(all-trans-polyprenyl)phenol + S-adenosyl-L-homocysteine + H(+). Its pathway is cofactor biosynthesis; ubiquinone biosynthesis. In terms of biological role, O-methyltransferase that catalyzes the 2 O-methylation steps in the ubiquinone biosynthetic pathway. This is Ubiquinone biosynthesis O-methyltransferase from Leptothrix cholodnii (strain ATCC 51168 / LMG 8142 / SP-6) (Leptothrix discophora (strain SP-6)).